A 146-amino-acid polypeptide reads, in one-letter code: Hut operon positive regulatory protein (146 aa).

It belongs to the HutP family. As to quaternary structure, homohexamer.

Antiterminator that binds to cis-acting regulatory sequences on the mRNA in the presence of histidine, thereby suppressing transcription termination and activating the hut operon for histidine utilization. The polypeptide is Hut operon positive regulatory protein (Bacillus mycoides (strain KBAB4) (Bacillus weihenstephanensis)).